A 574-amino-acid polypeptide reads, in one-letter code: Acyloxyacyl hydrolase (574 aa).

The signal sequence occupies residues Met1–Ala22. Positions Ser23–Ser33 are excised as a propeptide. In terms of domain architecture, Saposin B-type spans His36–Ala117. The tract at residues Gly37–Cys69 is important for enzyme activity, localization to cytoplasmic vesicles, and protein stability. 8 disulfide bridges follow: Cys40–Cys113, Cys43–Cys107, Cys69–Cys82, Cys122–Cys452, Cys159–Cys168, Cys205–Cys229, Cys248–Cys328, and Cys375–Cys458. Residue Asn58 is glycosylated (N-linked (GlcNAc...) asparagine). Positions Glu172–Lys176 are lipopolysaccharide binding. Ca(2+) contacts are provided by Asp183, Asp185, Asp187, His189, Asp204, Asn206, Asp207, Asp209, Val212, Asp222, Asp226, Asn228, Asn230, Ile232, and Glu244. Asn206 is a glycosylation site (N-linked (GlcNAc...) asparagine). The active site involves Ser262. Residues Asn408 and Asn465 are each glycosylated (N-linked (GlcNAc...) asparagine).

As to quaternary structure, heterodimer of the large and small subunits; disulfide-linked. Ca(2+) is required as a cofactor. Post-translationally, cleaved into a large and a small subunit. In terms of processing, the small subunit is N-glycosylated. As to expression, detected in peritoneal macrophages (at protein level). Strongly expressed in kidney cortex, where it may be produced by proximal tubule cells. In liver, expressed at high levels in Kupffer cells. Expressed by dendritic cells. Detected at low levels in alveolar macrophages.

The protein localises to the secreted. It localises to the cytoplasmic vesicle. The enzyme catalyses a 3-(acyloxy)acyl derivative of bacterial toxin + H2O = a 3-hydroxyacyl derivative of bacterial toxin + a fatty acid + H(+). Removes the secondary (acyloxyacyl-linked) fatty acyl chains from the lipid A region of bacterial lipopolysaccharides (LPS). By breaking down LPS, terminates the host response to bacterial infection and prevents prolonged and damaging inflammatory responses. In peritoneal macrophages, seems to be important for recovery from a state of immune tolerance following infection by Gram-negative bacteria. This is Acyloxyacyl hydrolase from Mus musculus (Mouse).